The sequence spans 438 residues: POU domain, class 3, transcription factor 3-A (438 aa).

Disordered stretches follow at residues 22–43, 102–172, and 186–248; these read VHSESGGGGMQPGSGAVTSVSG, SPWS…QSQQ, and GMLN…PTSD. 2 stretches are compositionally biased toward polar residues: residues 103–123 and 146–159; these read PWSSSPVGMAGSPQQQDVKSS and QSHQSAWGGTTASH. The span at 160-172 shows a compositional bias: low complexity; the sequence is ISTITGGQQQSQQ. Positions 210–230 are enriched in basic residues; it reads HHHHHHHQQQHPHHHHHHQHH. Positions 242 to 316 constitute a POU-specific domain; sequence EDTPTSDDLE…LLNKWLEEAD (75 aa). The homeobox DNA-binding region spans 334–393; sequence KRKKRTSIEVSVKGALESHFLKCPKPSAQEITSLADNLQLEKEVVRVWFCNRRQKEKRMT.

This sequence belongs to the POU transcription factor family. Class-3 subfamily. As to expression, predominantly expressed in the embryonic and adult central nervous system. In adults, isoform 2 is expressed in the brain, ovary, basal cells of the skin and muscle satellite cells.

It localises to the nucleus. Functionally, transcription factor that may play important roles in patterning the embryonic brain. This Danio rerio (Zebrafish) protein is POU domain, class 3, transcription factor 3-A (pou3f3a).